The following is a 379-amino-acid chain: Cystathionine gamma-lyase (379 aa).

At Lys195 the chain carries N6-(pyridoxal phosphate)lysine.

Belongs to the trans-sulfuration enzymes family. Requires pyridoxal 5'-phosphate as cofactor.

It catalyses the reaction L,L-cystathionine + H2O = 2-oxobutanoate + L-cysteine + NH4(+). It carries out the reaction L-homocysteine + H2O = 2-oxobutanoate + hydrogen sulfide + NH4(+) + H(+). In terms of biological role, catalyzes the conversion of cystathionine to cysteine, and homocysteine to sulfide. The protein is Cystathionine gamma-lyase (mccB) of Bacillus subtilis (strain 168).